The following is a 244-amino-acid chain: uncharacterized protein (244 aa).

The region spanning 7-74 (VKEKDQVVAH…YHRGAFIERF (68 aa)) is the HTH gntR-type domain. Residues 34 to 53 (RNEIAHGLGVSRVPIQEALV) constitute a DNA-binding region (H-T-H motif).

This is an uncharacterized protein from Mycobacterium tuberculosis (strain CDC 1551 / Oshkosh).